We begin with the raw amino-acid sequence, 37 residues long: Large ribosomal subunit protein bL36 (37 aa).

The protein belongs to the bacterial ribosomal protein bL36 family.

The protein is Large ribosomal subunit protein bL36 of Tropheryma whipplei (strain Twist) (Whipple's bacillus).